Reading from the N-terminus, the 357-residue chain is Phosphoserine aminotransferase (357 aa).

An L-glutamate-binding site is contributed by Arg41. Residues 75 to 76 (GT), Trp100, Thr150, Asp170, and Gln193 contribute to the pyridoxal 5'-phosphate site. An N6-(pyridoxal phosphate)lysine modification is found at Lys194. 234–235 (NT) serves as a coordination point for pyridoxal 5'-phosphate.

This sequence belongs to the class-V pyridoxal-phosphate-dependent aminotransferase family. SerC subfamily. In terms of assembly, homodimer. Pyridoxal 5'-phosphate serves as cofactor.

Its subcellular location is the cytoplasm. It carries out the reaction O-phospho-L-serine + 2-oxoglutarate = 3-phosphooxypyruvate + L-glutamate. It catalyses the reaction 4-(phosphooxy)-L-threonine + 2-oxoglutarate = (R)-3-hydroxy-2-oxo-4-phosphooxybutanoate + L-glutamate. It functions in the pathway amino-acid biosynthesis; L-serine biosynthesis; L-serine from 3-phospho-D-glycerate: step 2/3. In terms of biological role, catalyzes the reversible conversion of 3-phosphohydroxypyruvate to phosphoserine and of 3-hydroxy-2-oxo-4-phosphonooxybutanoate to phosphohydroxythreonine. The protein is Phosphoserine aminotransferase of Lactiplantibacillus plantarum (strain ATCC BAA-793 / NCIMB 8826 / WCFS1) (Lactobacillus plantarum).